A 160-amino-acid chain; its full sequence is MKQKYSKKSKKWIYITTIIFILILDISSKHLIIKYIKTYDTKKIFSVLNFFHVHNHGAAFSFLSDQNGWQKWFLSTVSILTILVMTRIITKLKKQETKKITAYSLIIAGATGNLIDRIFYGFVVDFIDIHINDWHFATFNIADCSIFIGIIILMRINYST.

Transmembrane regions (helical) follow at residues 13–33 (IYIT…HLII), 72–92 (WFLS…ITKL), and 104–124 (SLII…GFVV). Residues Asp-125 and Asp-143 contribute to the active site. The chain crosses the membrane as a helical span at residues 134 to 154 (WHFATFNIADCSIFIGIIILM).

Belongs to the peptidase A8 family.

It localises to the cell inner membrane. The catalysed reaction is Release of signal peptides from bacterial membrane prolipoproteins. Hydrolyzes -Xaa-Yaa-Zaa-|-(S,diacylglyceryl)Cys-, in which Xaa is hydrophobic (preferably Leu), and Yaa (Ala or Ser) and Zaa (Gly or Ala) have small, neutral side chains.. It participates in protein modification; lipoprotein biosynthesis (signal peptide cleavage). In terms of biological role, this protein specifically catalyzes the removal of signal peptides from prolipoproteins. This chain is Lipoprotein signal peptidase, found in Buchnera aphidicola subsp. Acyrthosiphon pisum (strain Tuc7).